A 348-amino-acid chain; its full sequence is Chaperone protein DnaJ (348 aa).

Residues 3-65 (DLYGILGVDH…EQRQRYDRHV (63 aa)) enclose the J domain. The segment at 109-191 (GGSQVVKIDS…CYGNGSRSAP (83 aa)) adopts a CR-type zinc-finger fold. Zn(2+) contacts are provided by C122, C125, C139, C142, C165, C168, C179, and C182. CXXCXGXG motif repeat units follow at residues 122–129 (CDVCNGTR), 139–146 (CFDCNGSG), 165–172 (CSKCRGNG), and 179–186 (CRRCYGNG).

It belongs to the DnaJ family. Homodimer. Zn(2+) is required as a cofactor.

The protein resides in the cytoplasm. Participates actively in the response to hyperosmotic and heat shock by preventing the aggregation of stress-denatured proteins and by disaggregating proteins, also in an autonomous, DnaK-independent fashion. Unfolded proteins bind initially to DnaJ; upon interaction with the DnaJ-bound protein, DnaK hydrolyzes its bound ATP, resulting in the formation of a stable complex. GrpE releases ADP from DnaK; ATP binding to DnaK triggers the release of the substrate protein, thus completing the reaction cycle. Several rounds of ATP-dependent interactions between DnaJ, DnaK and GrpE are required for fully efficient folding. Also involved, together with DnaK and GrpE, in the DNA replication of plasmids through activation of initiation proteins. This Tropheryma whipplei (strain TW08/27) (Whipple's bacillus) protein is Chaperone protein DnaJ.